The sequence spans 786 residues: Rho GTPase-activating protein 10 (786 aa).

In terms of domain architecture, BAR spans 7–262 (EFSDCYLDSP…IRQNPKDHKR (256 aa)). In terms of domain architecture, PH spans 265–372 (QFTAEGYLYV…WLEALGGKEA (108 aa)). The 186-residue stretch at 389 to 574 (AQLDKMGFTI…ILIENHEKIF (186 aa)) folds into the Rho-GAP domain. 2 disordered regions span residues 576–608 (TPPD…QRTK) and 621–727 (EDGD…PPES). Over residues 599–608 (QSKRQGQRTK) the composition is skewed to basic residues. The segment covering 634 to 651 (PTSSLDSLSSPSPVTTAV) has biased composition (low complexity). The span at 676-688 (IPGQTRSSMVQWL) shows a compositional bias: polar residues. The segment covering 689–712 (NPQSPTTTSSNSAVTPLSPGSSPF) has biased composition (low complexity). One can recognise an SH3 domain in the interval 728-786 (IRSRKARAVYPCEAEHSSELSFEIGAIFEDVQTSREPGWLEGTLNGKRGLIPQNYVKLL).

In terms of assembly, interacts with PKN3. Interacts with caspase-activated PAK2 proteolytic fragment PAK-2p34; the interaction does not affect GRAF2/ARHGAP10 GTPase activation activity towards RHOA and CDC42. Interacts via its SH3 domain with PTK2/FAK1. Interacts with PTK2B/PYK2; the interaction negatively regulates GRAF2/ARHGAP10 GTPase-activating activity. Interacts with MICAL1 and WDR44; complex formation might transit from GRAF2/ARHGAP10-MICAL1 to GRAF2/ARHGAP10-WDR44 complexes. Phosphorylated. Phosphorylated in vitro by constitutive active PKN3. High levels of expression in heart and skeletal muscle.

Its subcellular location is the cytoplasm. It localises to the perinuclear region. The protein resides in the cell membrane. The protein localises to the endosome membrane. Functionally, GTPase-activating protein that catalyzes the conversion of active GTP-bound Rho GTPases to their inactive GDP-bound form, thus suppressing various Rho GTPase-mediated cellular processes. Also converts Cdc42 to an inactive GDP-bound state. Essential for PTKB2 regulation of cytoskeletal organization via Rho family GTPases. Inhibits PAK2 proteolytic fragment PAK-2p34 kinase activity and changes its localization from the nucleus to the perinuclear region. Stabilizes PAK-2p34 thereby increasing stimulation of cell death. Associates with MICAL1 on the endosomal membrane to promote Rab8-Rab10-dependent tubule extension. After dissociation with MICAL1, recruits WDR44 which connects the endoplasmic reticulum (ER) with the endosomal tubule, thereby participating in the export of a subset of neosynthesized proteins. The protein is Rho GTPase-activating protein 10 (ARHGAP10) of Homo sapiens (Human).